A 309-amino-acid chain; its full sequence is L-arabinose 1-dehydrogenase (NAD(P)(+)) (309 aa).

Residues Ile-15 and 37 to 38 (SR) each bind NADP(+). The Proton donor role is filled by Lys-91. Asp-169 contacts NADP(+).

The protein belongs to the Gfo/Idh/MocA family. Monomer.

It carries out the reaction alpha-L-arabinopyanose + NAD(+) = L-arabinono-1,4-lactone + NADH + H(+). The enzyme catalyses alpha-L-arabinopyanose + NADP(+) = L-arabinono-1,4-lactone + NADPH + H(+). The catalysed reaction is D-galactose + NAD(+) = D-galactono-1,4-lactone + NADH + H(+). It catalyses the reaction D-galactose + NADP(+) = D-galactono-1,5-lactone + NADPH + H(+). It functions in the pathway carbohydrate degradation; L-arabinose degradation via L-arabinono-1,4-lactone pathway. Its function is as follows. Catalyzes the NAD(P)(+)-dependent conversion of L-arabinose to L-arabino-gamma-lactone. Is involved in a degradation pathway of L-arabinose that allows A.brasilense to grow on L-arabinose as a sole carbon source. Prefers NADP(+) to NAD(+) as electron acceptor. Displays high catalytic efficiency for both L-arabinose and D-galactose in vitro. However, the enzyme appears to be involved in the metabolism of L-arabinose but not D-galactose in vivo. To a lesser extent, is also active on D-talose and D-xylose as substrates in vitro, but not with D-arabinose, D-glucose, D-ribose, L-xylose, L-mannose, L-lyxose, and D-fructose. This Azospirillum brasilense protein is L-arabinose 1-dehydrogenase (NAD(P)(+)) (araA).